Here is a 102-residue protein sequence, read N- to C-terminus: Large ribosomal subunit protein bL21 (102 aa).

This sequence belongs to the bacterial ribosomal protein bL21 family. As to quaternary structure, part of the 50S ribosomal subunit. Contacts protein L20.

In terms of biological role, this protein binds to 23S rRNA in the presence of protein L20. The polypeptide is Large ribosomal subunit protein bL21 (Finegoldia magna (strain ATCC 29328 / DSM 20472 / WAL 2508) (Peptostreptococcus magnus)).